A 249-amino-acid chain; its full sequence is Probable septum site-determining protein MinC (249 aa).

A disordered region spans residues 115-144 (PTAVSPPPPPPPPPARAEPAPPAARPAPGR). A compositionally biased stretch (pro residues) spans 118–139 (VSPPPPPPPPPARAEPAPPAAR).

It belongs to the MinC family. As to quaternary structure, interacts with MinD and FtsZ.

In terms of biological role, cell division inhibitor that blocks the formation of polar Z ring septums. Rapidly oscillates between the poles of the cell to destabilize FtsZ filaments that have formed before they mature into polar Z rings. Prevents FtsZ polymerization. The protein is Probable septum site-determining protein MinC of Xanthomonas axonopodis pv. citri (strain 306).